A 453-amino-acid chain; its full sequence is Probable exopolygalacturonase B (453 aa).

Positions 1-16 (MKFFALAALFASTVNS) are cleaved as a signal peptide. Residues asparagine 185 and asparagine 225 are each glycosylated (N-linked (GlcNAc...) asparagine). The active-site Proton donor is aspartate 255. A disulfide bridge connects residues cysteine 257 and cysteine 274. 2 N-linked (GlcNAc...) asparagine glycosylation sites follow: asparagine 263 and asparagine 275. Histidine 278 is a catalytic residue. 2 PbH1 repeats span residues 295 to 316 (IENV…RLKA) and 327 to 348 (INNV…VLDQ). Residues asparagine 302, asparagine 329, asparagine 354, and asparagine 366 are each glycosylated (N-linked (GlcNAc...) asparagine). One copy of the PbH1 3 repeat lies at 362–405 (PSRVNFTNIVFEDIYGTSSGKRGKVVADLTCSPNAVCSGIRLKN). An intrachain disulfide couples cysteine 392 to cysteine 398. Residue asparagine 436 is glycosylated (N-linked (GlcNAc...) asparagine).

The protein belongs to the glycosyl hydrolase 28 family.

Its subcellular location is the secreted. The catalysed reaction is [(1-&gt;4)-alpha-D-galacturonosyl](n) + H2O = alpha-D-galacturonate + [(1-&gt;4)-alpha-D-galacturonosyl](n-1). Specific in hydrolyzing the terminal glycosidic bond of polygalacturonic acid and oligogalacturonates. The protein is Probable exopolygalacturonase B (pgxB) of Aspergillus fumigatus (strain ATCC MYA-4609 / CBS 101355 / FGSC A1100 / Af293) (Neosartorya fumigata).